Reading from the N-terminus, the 308-residue chain is MLSLRTPGFQGESVQFSPLVENKIAVAAVTHYGLGGSGRLYIHDVTPKGIQVCQHYDVEDSLFGVRWSQNCENQVYACCGDGSLRLFDLTMPSKPIHKWKEHKAEIVAIDTNTVDRRIVVTGSWDGTIKLWLGNLPNSVQTLNNGSNSRILTVATHYSSPNLLGYTSSDGLCKFWDFRSSDKFMSIEIPNQITCMNWSKSNHRMVYTADNNNLVYCYDIANLKTPLSVLSGHQLAVRSIKSSNSAHDLLATASYDMTSRIFDPEQHSCIRKVDLHSEFVRDVDWSDFGDGSWIASVGWDESLYIWNAF.

6 WD repeats span residues 57 to 88 (DVED…RLFD), 101 to 132 (EHKA…KLWL), 145 to 176 (GSNS…KFWD), 187 to 218 (EIPN…YCYD), 231 to 262 (GHQL…RIFD), and 274 to 306 (LHSE…YIWN).

It belongs to the WD repeat peroxin-7 family. In terms of assembly, interacts with PEX21.

The protein resides in the cytoplasm. The protein localises to the cytosol. Its subcellular location is the peroxisome matrix. Functionally, receptor required for the peroxisomal import of proteins containing a C-terminal PTS2-type peroxisomal targeting signal, such as 3-oxoacyl-CoA thiolase. Specifically binds to cargo proteins containing a PTS2 peroxisomal targeting signal in the cytosol. Cargo protein-binding triggers interaction with PEX21 and formation of a ternary complex composed of PEX21 and PEX7 along with PTS2-containing cargo proteins, which is tranlocated into peroxisomes by passing through the PEX13-PEX14 docking complex. This Schizosaccharomyces pombe (strain 972 / ATCC 24843) (Fission yeast) protein is Peroxisomal targeting signal 2 receptor (pex7).